The sequence spans 461 residues: Early growth response factor homolog 1 (461 aa).

3 disordered regions span residues 1–25, 96–152, and 232–308; these read MALHEPPSKLNRHSHSNLLKPPSLN, TLMP…ELTL, and DVLH…YSSL. 4 stretches are compositionally biased toward polar residues: residues 96–105, 129–144, 249–265, and 272–291; these read TLMPAPSSSY, GSNSFGVPRMTNGNSK, LGSSLQNEHPQSNSRPS, and QRTNTSASLTRSMDHSSMSP. Over residues 299–308 the composition is skewed to low complexity; it reads YSNSASYSSL. 3 consecutive C2H2-type zinc fingers follow at residues 374–398, 404–426, and 432–454; these read YKCPRDGCDRRFSRSDELTRHIRIH, FQCRICMRAFSRSDHLTTHVRTH, and FSCDICGRKFARSDERKRHTKVH.

The protein belongs to the EGR C2H2-type zinc-finger protein family. As to expression, expressed in sheath cells and distal tip cells of the somatic gonad, as well as in the intestine and sperm (at protein level). Expression not observed in oocytes (at protein level).

The protein localises to the nucleus. It is found in the cytoplasm. The protein resides in the perinuclear region. Sequence-specific DNA-binding transcription factor. Plays a role in oocyte development, acting cell-autonomously in the somatic gonad. Involved in negative regulation of oocyte MAPK activation and inhibits oocyte maturation and ovulation. In Caenorhabditis elegans, this protein is Early growth response factor homolog 1.